A 143-amino-acid chain; its full sequence is Nucleoside diphosphate kinase (143 aa).

Lys11, Phe59, Arg87, Thr93, Arg104, and Asn114 together coordinate ATP. His117 functions as the Pros-phosphohistidine intermediate in the catalytic mechanism.

The protein belongs to the NDK family. Homotetramer. Requires Mg(2+) as cofactor.

It is found in the cytoplasm. It catalyses the reaction a 2'-deoxyribonucleoside 5'-diphosphate + ATP = a 2'-deoxyribonucleoside 5'-triphosphate + ADP. It carries out the reaction a ribonucleoside 5'-diphosphate + ATP = a ribonucleoside 5'-triphosphate + ADP. In terms of biological role, major role in the synthesis of nucleoside triphosphates other than ATP. The ATP gamma phosphate is transferred to the NDP beta phosphate via a ping-pong mechanism, using a phosphorylated active-site intermediate. This Cronobacter sakazakii (strain ATCC BAA-894) (Enterobacter sakazakii) protein is Nucleoside diphosphate kinase.